A 125-amino-acid chain; its full sequence is Glycine cleavage system H protein (125 aa).

The region spanning 22 to 104 (SYVIGITDFA…YDTGWILKLE (83 aa)) is the Lipoyl-binding domain. At Lys63 the chain carries N6-lipoyllysine.

The protein belongs to the GcvH family. In terms of assembly, the glycine cleavage system is composed of four proteins: P, T, L and H. Requires (R)-lipoate as cofactor.

Its function is as follows. The glycine cleavage system catalyzes the degradation of glycine. The H protein shuttles the methylamine group of glycine from the P protein to the T protein. In terms of biological role, is also involved in protein lipoylation via its role as an octanoyl/lipoyl carrier protein intermediate. The chain is Glycine cleavage system H protein from Listeria monocytogenes serotype 4a (strain HCC23).